The chain runs to 761 residues: Ribonucleoside-diphosphate reductase subunit alpha (761 aa).

Positions 5 to 95 (LFVTKRNGKI…IFHLRKKAFG (91 aa)) constitute an ATP-cone domain. ATP is bound by residues lysine 9, 15-21 (ELINLDK), threonine 55, and lysine 91. Position 209 (threonine 209) interacts with GDP. Residues cysteine 225 and cysteine 462 are joined by a disulfide bond. DTTP-binding positions include 232 to 234 (DNL), arginine 262, and arginine 269. Residue asparagine 437 coordinates GDP. The Proton acceptor role is filled by asparagine 437. Cysteine 439 acts as the Cysteine radical intermediate in catalysis. GDP-binding positions include glutamate 441 and 623–625 (ETS). The active-site Proton acceptor is glutamate 441.

It belongs to the ribonucleoside diphosphate reductase large chain family. Tetramer of two alpha and two beta subunits.

The enzyme catalyses a 2'-deoxyribonucleoside 5'-diphosphate + [thioredoxin]-disulfide + H2O = a ribonucleoside 5'-diphosphate + [thioredoxin]-dithiol. Its activity is regulated as follows. Under complex allosteric control mediated by deoxynucleoside triphosphates and ATP binding to separate specificity and activation sites on the alpha subunit. The type of nucleotide bound at the specificity site determines substrate preference. It seems probable that ATP makes the enzyme reduce CDP and UDP, dGTP favors ADP reduction and dTTP favors GDP reduction. Stimulated by ATP and inhibited by dATP binding to the activity site. In terms of biological role, provides the precursors necessary for DNA synthesis. Catalyzes the biosynthesis of deoxyribonucleotides from the corresponding ribonucleotides. The polypeptide is Ribonucleoside-diphosphate reductase subunit alpha (nrdA) (Buchnera aphidicola subsp. Baizongia pistaciae (strain Bp)).